Consider the following 229-residue polypeptide: Large ribosomal subunit protein uL1 (229 aa).

The protein belongs to the universal ribosomal protein uL1 family. Part of the 50S ribosomal subunit.

In terms of biological role, binds directly to 23S rRNA. The L1 stalk is quite mobile in the ribosome, and is involved in E site tRNA release. Its function is as follows. Protein L1 is also a translational repressor protein, it controls the translation of the L11 operon by binding to its mRNA. The chain is Large ribosomal subunit protein uL1 from Streptococcus pyogenes serotype M1.